Consider the following 428-residue polypeptide: Histidine--tRNA ligase (428 aa).

Belongs to the class-II aminoacyl-tRNA synthetase family. In terms of assembly, homodimer.

Its subcellular location is the cytoplasm. The enzyme catalyses tRNA(His) + L-histidine + ATP = L-histidyl-tRNA(His) + AMP + diphosphate + H(+). The polypeptide is Histidine--tRNA ligase (Bordetella pertussis (strain Tohama I / ATCC BAA-589 / NCTC 13251)).